We begin with the raw amino-acid sequence, 374 residues long: Patatin-2-Kuras 4 (374 aa).

A signal peptide spans 1–11 (MILATTSSTCA). In terms of domain architecture, PNPLA spans 20–217 (LSIDGGGIKG…TVGDPALLSL (198 aa)). Residues 24-29 (GGGIKG) carry the GXGXXG motif. Residues 63 to 67 (GTSTG) carry the GXSXG motif. Serine 65 functions as the Nucleophile in the catalytic mechanism. An N-linked (GlcNAc...) asparagine glycan is attached at asparagine 103. Aspartate 203 acts as the Proton acceptor in catalysis. A DGA/G motif is present at residues 203-205 (DGG). The stretch at 309–372 (ENALTGTTTE…DRKKLRANKA (64 aa)) forms a coiled coil.

Belongs to the patatin family.

It localises to the vacuole. Functionally, probable lipolytic acyl hydrolase (LAH), an activity which is thought to be involved in the response of tubers to pathogens. The chain is Patatin-2-Kuras 4 (pat2-k4) from Solanum tuberosum (Potato).